The primary structure comprises 257 residues: Inositol diphosphatase DSP2 (257 aa).

In terms of domain architecture, Tyrosine-protein phosphatase spans Asn66–Ser251. 1D-myo-inositol hexakisphosphate is bound by residues Ile168 and Lys172. Catalysis depends on Cys192, which acts as the Phosphocysteine intermediate.

This sequence belongs to the protein-tyrosine phosphatase family. Atypical dual-specificity phosphatase Siw14-like subfamily. In terms of tissue distribution, expressed in roots, leaves, stems, flowers and siliques.

It carries out the reaction 5-diphospho-1D-myo-inositol 1,2,3,4,6-pentakisphosphate + H2O = 1D-myo-inositol hexakisphosphate + phosphate + H(+). The enzyme catalyses 1,5-bis(diphospho)-1D-myo-inositol 2,3,4,6-tetrakisphosphate + H2O = 1-diphospho-1D-myo-inositol 2,3,4,5,6-pentakisphosphate + phosphate + 2 H(+). It catalyses the reaction 3,5-bis(diphospho)-1D-myo-inositol 1,2,4,6-tetrakisphosphate + H2O = 3-diphospho-1D-myo-inositol 1,2,4,5,6-pentakisphosphate + phosphate + 2 H(+). The catalysed reaction is 6-diphospho-1D-myo-inositol pentakisphosphate + H2O = 1D-myo-inositol hexakisphosphate + phosphate + H(+). Functionally, cleaves the beta-phosphate at the 5-position of soluble inositol pyrophosphates. Has highest activity on 5-diphosphoinositol 1,2,3,4,6-pentakisphosphate (5-InsP(7)), 1,5-bis-diphosphoinositol 2,3,4,6-tetrakisphosphate (1,5-InsP(8)) and 3,5-InsP(8). Possesses phosphotyrosine phosphatase activity in vitro. Dephosphorylates the phosphoinositides PI(3,5)P2. Hydrolyzes para-nitrophenyl phosphate and O-methylfluorescein phosphate in vitro. This chain is Inositol diphosphatase DSP2, found in Arabidopsis thaliana (Mouse-ear cress).